The sequence spans 158 residues: MLP-like protein 43 (158 aa).

The residue at position 2 (Ala2) is an N-acetylalanine.

This sequence belongs to the MLP family.

The chain is MLP-like protein 43 (MLP43) from Arabidopsis thaliana (Mouse-ear cress).